Reading from the N-terminus, the 222-residue chain is Chalcone--flavanone isomerase 1 (222 aa).

Thr48, Asn113, and Thr190 together coordinate substrate.

Belongs to the chalcone isomerase family.

The catalysed reaction is a chalcone = a flavanone.. It functions in the pathway secondary metabolite biosynthesis; flavonoid biosynthesis. In terms of biological role, catalyzes the intramolecular cyclization of bicyclic chalcones into tricyclic (S)-flavanones. Responsible for the isomerization of 4,2',4',6'-tetrahydroxychalcone (also termed chalcone) into naringenin. The chain is Chalcone--flavanone isomerase 1 (CHI1) from Medicago sativa (Alfalfa).